A 326-amino-acid polypeptide reads, in one-letter code: Phosphatidylinositol:ceramide inositolphosphotransferase (326 aa).

Transmembrane regions (helical) follow at residues 33-53 (LLLAGLVFQYIHGLAARGVHY), 82-102 (SVFTFIFISFLLWSFHPFIYH), 115-135 (VLAFLVASQFLRIITFYSTQL), 169-189 (VLFGCGDLIFSSHMIFTLVFV), 199-219 (RLIKILAWLMAIIQSLLIIAS), and 222-242 (HYSVDVVVAWYTVNLVVFFID). The active site involves His-181. Active-site residues include His-222 and Asp-226. A disordered region spans residues 306–326 (MNGKHGEDINHTLSDATPNGT). Residues 316-326 (HTLSDATPNGT) are compositionally biased toward polar residues.

The protein belongs to the sphingomyelin synthase family.

The protein resides in the golgi apparatus. Its subcellular location is the trans-Golgi network membrane. In terms of biological role, catalyzes the transfer of the phosphorylinositol group from phosphatidylinositol (PI) to phytoceramide, an essential step in sphingolipid biosynthesis. May play an important role in modulating plant programmed cell death (PCD) associated with defense (e.g. toward Golovinomyces cichoracearum) by promoting sphingolipid metabolism and regulating ceramide accumulation. The chain is Phosphatidylinositol:ceramide inositolphosphotransferase (ERH1) from Oryza sativa subsp. indica (Rice).